The primary structure comprises 327 residues: Altered inheritance rate of mitochondria protein 25 (327 aa).

The protein belongs to the phospholipid scramblase family.

It is found in the mitochondrion. The sequence is that of Altered inheritance rate of mitochondria protein 25 (AIM25) from Saccharomyces cerevisiae (strain ATCC 204508 / S288c) (Baker's yeast).